A 470-amino-acid chain; its full sequence is Uronate isomerase (470 aa).

The protein belongs to the metallo-dependent hydrolases superfamily. Uronate isomerase family.

The enzyme catalyses D-glucuronate = D-fructuronate. It catalyses the reaction aldehydo-D-galacturonate = keto-D-tagaturonate. The protein operates within carbohydrate metabolism; pentose and glucuronate interconversion. This is Uronate isomerase from Shigella boydii serotype 18 (strain CDC 3083-94 / BS512).